The sequence spans 100 residues: DNA-binding protein HU (100 aa).

The protein belongs to the bacterial histone-like protein family.

In terms of biological role, histone-like DNA-binding protein which is capable of wrapping DNA to stabilize it, and thus to prevent its denaturation under extreme environmental conditions. The sequence is that of DNA-binding protein HU (hup) from Synechocystis sp. (strain ATCC 27184 / PCC 6803 / Kazusa).